The sequence spans 664 residues: Zinc finger protein 800 (664 aa).

Residues 69–91 form a C2H2-type 1; degenerate zinc finger; sequence FECKLCRSLFRGLPNLITHKKFY. Residue lysine 132 forms a Glycyl lysine isopeptide (Lys-Gly) (interchain with G-Cter in SUMO2) linkage. Polar residues-rich tracts occupy residues 154–179 and 207–224; these read IEVT…EQSK and SDEQ…SDNS. Residues 154 to 224 form a disordered region; sequence IEVTESSSTP…QADLETSDNS (71 aa). The C2H2-type 2 zinc-finger motif lies at 230–253; the sequence is LICCLCRKEFNSRRGVRRHIRKVH. Residue lysine 279 forms a Glycyl lysine isopeptide (Lys-Gly) (interchain with G-Cter in SUMO2) linkage. The C2H2-type 3 zinc-finger motif lies at 287–310; the sequence is RSCPVCCKSFATKANVRRHFDEVH. A Phosphoserine modification is found at serine 317. Threonine 319 bears the Phosphothreonine mark. The disordered stretch occupies residues 328 to 349; it reads QPLFLDSISPKKSFKTRKQKSS. Serine 336 is subject to Phosphoserine. A compositionally biased stretch (basic residues) spans 339–348; that stretch reads KSFKTRKQKS. The C2H2-type 4 zinc-finger motif lies at 357-382; it reads TACKCLLCKRKYSSQIMLKRHMQIVH. The disordered stretch occupies residues 388–476; sequence GTNSKREKGP…GGQQKTRKPK (89 aa). Lysine 392 participates in a covalent cross-link: Glycyl lysine isopeptide (Lys-Gly) (interchain with G-Cter in SUMO2). A Glycyl lysine isopeptide (Lys-Gly) (interchain with G-Cter in SUMO1); alternate cross-link involves residue lysine 409. Lysine 409 is covalently cross-linked (Glycyl lysine isopeptide (Lys-Gly) (interchain with G-Cter in SUMO2); alternate). Residues 416–436 are compositionally biased toward polar residues; that stretch reads VESSPPSITHSPQNELKGTNH. Phosphoserine is present on residues serine 422, serine 426, serine 455, serine 457, serine 460, and serine 462. Residues 458-470 are compositionally biased toward polar residues; sequence PKSTSPSAAGGQQ. A Glycyl lysine isopeptide (Lys-Gly) (interchain with G-Cter in SUMO2) cross-link involves residue lysine 476. 2 C2H2-type zinc fingers span residues 486 to 508 and 519 to 542; these read LYCK…IELH and YKCP…TVVH. 2 disordered regions span residues 574–599 and 635–664; these read KRGP…PSKK and HHKK…KALV. Residues 577–591 are compositionally biased toward basic and acidic residues; it reads PSRDEAKHSDSKHDG. Residue lysine 599 forms a Glycyl lysine isopeptide (Lys-Gly) (interchain with G-Cter in SUMO2) linkage. The C2H2-type 7 zinc finger occupies 618-640; that stretch reads HRCNKCGKAFAKKTYLEHHKKTH. A compositionally biased stretch (basic residues) spans 653-664; sequence TKGRSTRSKALV.

The protein belongs to the krueppel C2H2-type zinc-finger protein family.

It localises to the nucleus. Functionally, may be involved in transcriptional regulation. In Homo sapiens (Human), this protein is Zinc finger protein 800 (ZNF800).